Here is a 235-residue protein sequence, read N- to C-terminus: uncharacterized protein (235 aa).

Residues 27–47 (AMKLWSTWITLLILTFFCSEC) traverse the membrane as a helical segment. Residues 124–185 (YFWGESKYVP…CCGYDCCSNS (62 aa)) enclose the CX domain. Residues 187–207 (IFTSIFSLLVILLIVSVLSIF) form a helical membrane-spanning segment.

It is found in the membrane. This is an uncharacterized protein from Caenorhabditis elegans.